We begin with the raw amino-acid sequence, 109 residues long: DNA-directed RNA polymerase subunit I (109 aa).

It carries out the reaction RNA(n) + a ribonucleoside 5'-triphosphate = RNA(n+1) + diphosphate. In terms of biological role, DNA-dependent RNA polymerase catalyzes the transcription of DNA into RNA using the four ribonucleoside triphosphates as substrates. This is DNA-directed RNA polymerase subunit I (rpoI) from Methanocaldococcus jannaschii (strain ATCC 43067 / DSM 2661 / JAL-1 / JCM 10045 / NBRC 100440) (Methanococcus jannaschii).